The primary structure comprises 527 residues: MILSSYNTIQSVFCCCCCCSVQKRQMRTQISLSTDEELPEKYTQRRRPWLSQLSNKKQSNTGRVQPSKRKPLPPLPPSEVAEEKIQVKALYDFLPREPCNLALRRAEEYLILEKYNPHWWKARDRLGNEGLIPSNYVTENKITNLEIYEWYHRNITRNQAEHLLRQESKEGAFIVRDSRHLGSYTISVFMGARRSTEAAIKHYQIKKNDSGQWYVAERHAFQSIPELIWYHQHNAAGLMTRLRYPVGLMGSCLPATAGFSYEKWEIDPSELAFIKEIGSGQFGVVHLGEWRSHIQVAIKAINEGSMSEEDFIEEAKVMMKLSHSKLVQLYGVCIQRKPLYIVTEFMENGCLLNYLRENKGKLRKEMLLSVCQDICEGMEYLERNGYIHRDLAARNCLVSSTCIVKISDFGMTRYVLDDEYVSSFGAKFPIKWSPPEVFLFNKYSSKSDVWSFGVLMWEVFTEGKMPFENKSNLQVVEAISEGFRLYRPHLAPMSIYEVMYSCWHEKPEGRPTFAELLRAVTEIAETW.

The tract at residues 35 to 79 is disordered; it reads DEELPEKYTQRRRPWLSQLSNKKQSNTGRVQPSKRKPLPPLPPSE. The segment covering 51–64 has biased composition (polar residues); the sequence is SQLSNKKQSNTGRV. A Nuclear localization signal motif is present at residues 68–73; it reads KRKPLP. One can recognise an SH3 domain in the interval 82–142; the sequence is EEKIQVKALY…PSNYVTENKI (61 aa). Y91 is modified (phosphotyrosine; by autocatalysis). Positions 150-246 constitute an SH2 domain; that stretch reads WYHRNITRNQ…GLMTRLRYPV (97 aa). The region spanning 271 to 527 is the Protein kinase domain; sequence LAFIKEIGSG…RAVTEIAETW (257 aa). ATP is bound by residues 277-285 and K299; that span reads IGSGQFGVV. The active-site Proton acceptor is D390. Residue Y420 is modified to Phosphotyrosine; by FYN and autocatalysis.

The protein belongs to the protein kinase superfamily. Tyr protein kinase family. TEC subfamily. As to quaternary structure, interacts with PARP1 and EEF1A1. Interacts with SH2D2A. Interacts with FYN. Post-translationally, phosphorylated at Tyr-420 by FYN. Autophosphorylation at Tyr-91 is critical for the activation of TXK, leading to the up-regulation of IFN-gamma gene transcription. In terms of processing, the cysteine string at the N-terminus is palmitoylated and required for the proper subcellular location. Expressed in T-cells and some myeloid cell lines. Expressed in Th1/Th0 cells with IFN-gamma-producing potential.

It localises to the cytoplasm. The protein localises to the nucleus. Its subcellular location is the cell membrane. It catalyses the reaction L-tyrosyl-[protein] + ATP = O-phospho-L-tyrosyl-[protein] + ADP + H(+). With respect to regulation, activated by phosphorylation by FYN. Non-receptor tyrosine kinase that plays a redundant role with ITK in regulation of the adaptive immune response. Regulates the development, function and differentiation of conventional T-cells and nonconventional NKT-cells. When antigen presenting cells (APC) activate T-cell receptor (TCR), a series of phosphorylation leads to the recruitment of TXK to the cell membrane, where it is phosphorylated at Tyr-420. Phosphorylation leads to TXK full activation. Also contributes to signaling from many receptors and participates in multiple downstream pathways, including regulation of the actin cytoskeleton. Like ITK, can phosphorylate PLCG1, leading to its localization in lipid rafts and activation, followed by subsequent cleavage of its substrates. In turn, the endoplasmic reticulum releases calcium in the cytoplasm and the nuclear activator of activated T-cells (NFAT) translocates into the nucleus to perform its transcriptional duty. Plays a role in the positive regulation of IFNG transcription in T-helper 1 cells as part of an IFNG promoter-binding complex with PARP1 and EEF1A1. Within the complex, phosphorylates both PARP1 and EEF1A1. Also phosphorylates key sites in LCP2 leading to the up-regulation of Th1 preferred cytokine IL-2. Phosphorylates 'Tyr-201' of CTLA4 which leads to the association of PI-3 kinase with the CTLA4 receptor. This Homo sapiens (Human) protein is Tyrosine-protein kinase TXK (TXK).